We begin with the raw amino-acid sequence, 364 residues long: Histidinol-phosphate aminotransferase (364 aa).

K226 bears the N6-(pyridoxal phosphate)lysine mark.

The protein belongs to the class-II pyridoxal-phosphate-dependent aminotransferase family. Histidinol-phosphate aminotransferase subfamily. In terms of assembly, homodimer. It depends on pyridoxal 5'-phosphate as a cofactor.

The enzyme catalyses L-histidinol phosphate + 2-oxoglutarate = 3-(imidazol-4-yl)-2-oxopropyl phosphate + L-glutamate. The protein operates within amino-acid biosynthesis; L-histidine biosynthesis; L-histidine from 5-phospho-alpha-D-ribose 1-diphosphate: step 7/9. In Campylobacter jejuni subsp. doylei (strain ATCC BAA-1458 / RM4099 / 269.97), this protein is Histidinol-phosphate aminotransferase.